Reading from the N-terminus, the 984-residue chain is Lateral signaling target protein 2 homolog (984 aa).

Disordered regions lie at residues 308-462 (PLGS…DTDE), 508-527 (YGTT…PSTS), 539-642 (RLRL…SSLS), and 749-900 (DNVF…SPPA). 4 stretches are compositionally biased toward low complexity: residues 326–356 (TTSS…TTST), 369–380 (NNHNSNSNSSTN), 387–404 (TLRS…TPTA), and 412–433 (PSHS…PADW). Residues 434 to 462 (SDGDDEDEDDDDIEVDEEDLESSDDDTDE) show a composition bias toward acidic residues. Phosphoserine is present on residues S544 and S545. Residues 571 to 611 (RESHSHRHHQRHHHHHHHRHSHQHQHRQPHPHRTTRSGRKR) are compositionally biased toward basic residues. Residues 630–642 (LASGDTSAASSLS) show a composition bias toward low complexity. Polar residues-rich tracts occupy residues 760 to 779 (ATGQ…TIDL) and 789 to 806 (SGAT…SRSL). At S805 the chain carries Phosphoserine. Composition is skewed to low complexity over residues 811–869 (AASS…PVSA) and 886–899 (PSSA…LSPP). The FYVE-type zinc finger occupies 904 to 964 (DGKAPRCMAC…VCRDCYVREV (61 aa)). Zn(2+)-binding residues include C910, C913, C926, C929, C934, C937, C956, and C959.

The protein belongs to the lst-2 family.

Its function is as follows. Negative regulator of epidermal growth factor receptor (EGFR) signaling. This chain is Lateral signaling target protein 2 homolog, found in Drosophila yakuba (Fruit fly).